A 475-amino-acid polypeptide reads, in one-letter code: Putative histidine permease (475 aa).

The next 12 helical transmembrane spans lie at 20 to 40 (LFMISLGGVIGTGLFLSTGYT), 44 to 64 (AGPGGTILAYVIGGLMMYLVM), 87 to 107 (FIGPSTGFMVGIMYWINWVVT), 127 to 147 (SVWMWSAIFAALLFICNAFSV), 162 to 182 (IVTIILFIILGGAAMFGLISL), 199 to 219 (GLFPNGFLAVFIAMISVSFAF), 246 to 266 (VAWRTVIFFIGAVFILSGLIS), 277 to 297 (FVAVFAEIGIPYAADIMNFVI), 341 to 361 (ALMISMAVSCLSLVSSIVAPG), 363 to 383 (VYVVMVAIAGFAGVVVWMSIA), 410 to 430 (YPLMPIAALLLCSASCIGLAF), and 434 to 454 (QRIALFCGVPCIILCYLIYHF).

Belongs to the amino acid-polyamine-organocation (APC) superfamily.

It localises to the cell membrane. In Bacillus subtilis (strain 168), this protein is Putative histidine permease (hutM).